The sequence spans 278 residues: MDVRQSIHSEHAKTLDTQALRREFLIENIFVADEYTMVYSHIDRIIVGGIMPVSHSVEIGGEVGKQLGVSRLLDRRELGVINIGGAGAIIVDGQRHDIGHRDALYIGKGAKELVFVSNEASRPAKFYYNCAPAHTAYPTKKVSPADVAPVTLGDNLTSNRRTINKYFVPDVLETCQLSMGLTELAPGNLWNTMPCHTHERRMEVYLYFNMEEDSCVFHMMGQPQETRHIVMRNEQAVISPSWSIHSGVGTKAYTFIWGMVGENQVFDDMDHVAVQDLR.

Positions 196, 198, 203, and 245 each coordinate Zn(2+).

The protein belongs to the KduI family. Zn(2+) serves as cofactor.

It catalyses the reaction 5-dehydro-4-deoxy-D-glucuronate = 3-deoxy-D-glycero-2,5-hexodiulosonate. It participates in glycan metabolism; pectin degradation; 2-dehydro-3-deoxy-D-gluconate from pectin: step 4/5. Functionally, catalyzes the isomerization of 5-dehydro-4-deoxy-D-glucuronate to 3-deoxy-D-glycero-2,5-hexodiulosonate. This is 4-deoxy-L-threo-5-hexosulose-uronate ketol-isomerase from Salmonella dublin (strain CT_02021853).